We begin with the raw amino-acid sequence, 81 residues long: Costars family protein ABRACL (81 aa).

An N-acetylmethionine modification is found at M1.

Belongs to the costars family.

The chain is Costars family protein ABRACL (ABRACL) from Homo sapiens (Human).